We begin with the raw amino-acid sequence, 155 residues long: Ribonuclease H (155 aa).

The region spanning A7–D150 is the RNase H type-1 domain. 4 residues coordinate Mg(2+): D16, E54, D77, and D142.

This sequence belongs to the RNase H family. In terms of assembly, monomer. Requires Mg(2+) as cofactor.

Its subcellular location is the cytoplasm. It catalyses the reaction Endonucleolytic cleavage to 5'-phosphomonoester.. Endonuclease that specifically degrades the RNA of RNA-DNA hybrids. In Saccharopolyspora erythraea (strain ATCC 11635 / DSM 40517 / JCM 4748 / NBRC 13426 / NCIMB 8594 / NRRL 2338), this protein is Ribonuclease H.